Reading from the N-terminus, the 396-residue chain is MSKEKVILAYSGGLDTSVAITWLKKDYDVVAVCMDVGEGKDLEFIHDKALKVGAIESYVLDIKDEFAEEYVLPALQAHAYYEQKYPLVSALSRPVISKKLVEIAHQTGATTIAHGCTGKGNDQVRFEVAIAALDPKLKVIAPVREWKWSREEEINYAKENGVPVPADLDNPYSVDQNLWGRANECGVLENPWNQAPEEAFGITNSVEEAPDKAEYVDITFKEGKPVALDGQEMKLADLIQKLNVLAGKHGVGRIDHVENRLVGIKSREIYECPGAVTLLTAHKEIEDITLVREVSHFKPILENELSNLIYNALWFNPATQAILAYITETQKEVNGTAKVKLYKGSARVVARKSPHSLYDENLATYTSADSFDQDAAVGFIKLWGLPTQVNSQVNNK.

Ala9–Ser17 contacts ATP. Tyr85 is an L-citrulline binding site. Position 115 (Gly115) interacts with ATP. Residues Thr117, Asn121, and Asp122 each coordinate L-aspartate. L-citrulline is bound at residue Asn121. Arg125, Ser173, Glu258, and Tyr270 together coordinate L-citrulline.

Belongs to the argininosuccinate synthase family. Type 1 subfamily. As to quaternary structure, homotetramer.

The protein localises to the cytoplasm. It catalyses the reaction L-citrulline + L-aspartate + ATP = 2-(N(omega)-L-arginino)succinate + AMP + diphosphate + H(+). Its pathway is amino-acid biosynthesis; L-arginine biosynthesis; L-arginine from L-ornithine and carbamoyl phosphate: step 2/3. The chain is Argininosuccinate synthase from Streptococcus mutans serotype c (strain ATCC 700610 / UA159).